A 92-amino-acid polypeptide reads, in one-letter code: YcgL domain-containing protein Sbal_1869 (92 aa).

Positions 1–85 (MLCAVYKSSR…PQVNLLAEHK (85 aa)) constitute a YcgL domain.

In Shewanella baltica (strain OS155 / ATCC BAA-1091), this protein is YcgL domain-containing protein Sbal_1869.